A 209-amino-acid polypeptide reads, in one-letter code: Imidazoleglycerol-phosphate dehydratase (209 aa).

The disordered stretch occupies residues M1–R23.

Belongs to the imidazoleglycerol-phosphate dehydratase family.

The protein localises to the cytoplasm. It carries out the reaction D-erythro-1-(imidazol-4-yl)glycerol 3-phosphate = 3-(imidazol-4-yl)-2-oxopropyl phosphate + H2O. It participates in amino-acid biosynthesis; L-histidine biosynthesis; L-histidine from 5-phospho-alpha-D-ribose 1-diphosphate: step 6/9. This Synechococcus elongatus (strain ATCC 33912 / PCC 7942 / FACHB-805) (Anacystis nidulans R2) protein is Imidazoleglycerol-phosphate dehydratase.